A 286-amino-acid polypeptide reads, in one-letter code: General stress protein 39 (286 aa).

A disordered region spans residues 1 to 26 (MANYPKELPAQTQSRQPGIESEMNPS). 46-70 (LITGGDSGIGRAVSVAYAKEGADIA) contributes to the NAD(+) binding site. Residue serine 178 participates in substrate binding. Tyrosine 191 (proton acceptor) is an active-site residue.

It belongs to the short-chain dehydrogenases/reductases (SDR) family.

In Bacillus subtilis (strain 168), this protein is General stress protein 39 (ydaD).